Reading from the N-terminus, the 350-residue chain is Phosphotriesterase-related protein (350 aa).

Residues H22, H24, E169, H201, H230, and D298 each coordinate a divalent metal cation.

It belongs to the metallo-dependent hydrolases superfamily. Phosphotriesterase family. A divalent metal cation is required as a cofactor.

This is Phosphotriesterase-related protein from Drosophila melanogaster (Fruit fly).